Here is a 365-residue protein sequence, read N- to C-terminus: tRNA/tmRNA (uracil-C(5))-methyltransferase (365 aa).

Residues Q189, Y217, N222, E238, and D298 each contribute to the S-adenosyl-L-methionine site. C323 (nucleophile) is an active-site residue. The active-site Proton acceptor is the E357.

This sequence belongs to the class I-like SAM-binding methyltransferase superfamily. RNA M5U methyltransferase family. TrmA subfamily.

It catalyses the reaction uridine(54) in tRNA + S-adenosyl-L-methionine = 5-methyluridine(54) in tRNA + S-adenosyl-L-homocysteine + H(+). The catalysed reaction is uridine(341) in tmRNA + S-adenosyl-L-methionine = 5-methyluridine(341) in tmRNA + S-adenosyl-L-homocysteine + H(+). Its function is as follows. Dual-specificity methyltransferase that catalyzes the formation of 5-methyluridine at position 54 (m5U54) in all tRNAs, and that of position 341 (m5U341) in tmRNA (transfer-mRNA). This Shewanella amazonensis (strain ATCC BAA-1098 / SB2B) protein is tRNA/tmRNA (uracil-C(5))-methyltransferase.